Here is a 65-residue protein sequence, read N- to C-terminus: Conotoxin Cal16.1 (65 aa).

Residues 1-19 (MRCLSIFVLLVLLVSFAVA) form the signal peptide. The propeptide occupies 20 to 48 (ELDVEGEIVKQLLTRGTLKDADFWKRLEM). Pyrrolidone carboxylic acid is present on Q49. Disulfide bonds link C51–C60 and C53–C61. E63 bears the Glutamic acid 1-amide mark.

In terms of tissue distribution, expressed by the venom duct.

The protein resides in the secreted. In terms of biological role, probable neurotoxin with unknown target. Possibly targets ion channels. In Californiconus californicus (California cone), this protein is Conotoxin Cal16.1.